Reading from the N-terminus, the 387-residue chain is [LysW]-aminoadipate semialdehyde/glutamate semialdehyde transaminase (387 aa).

Residues 96–97 and Phe-123 each bind pyridoxal 5'-phosphate; that span reads GT. Substrate is bound at residue Arg-126. Pyridoxal 5'-phosphate is bound at residue 207-210; sequence DEIQ. Lys-236 is modified (N6-(pyridoxal phosphate)lysine). Ser-264 contributes to the substrate binding site. Thr-265 provides a ligand contact to pyridoxal 5'-phosphate.

It belongs to the class-III pyridoxal-phosphate-dependent aminotransferase family. LysJ subfamily. In terms of assembly, homodimer. Pyridoxal 5'-phosphate serves as cofactor.

Its subcellular location is the cytoplasm. The enzyme catalyses [amino-group carrier protein]-C-terminal-gamma-(L-lysyl)-L-glutamate + 2-oxoglutarate = [amino-group carrier protein]-C-terminal-N-(1-carboxy-5-oxopentan-1-yl)-L-glutamine + L-glutamate. The catalysed reaction is [amino-group carrier protein]-C-terminal-gamma-(L-ornithyl)-L-glutamate + 2-oxoglutarate = [amino-group carrier protein]-C-terminal-gamma-(L-glutamyl-5-semialdehyde)-L-glutamate + L-glutamate. It functions in the pathway amino-acid biosynthesis; L-lysine biosynthesis via AAA pathway; L-lysine from L-alpha-aminoadipate (Thermus route): step 4/5. The protein operates within amino-acid biosynthesis; L-arginine biosynthesis. Functionally, involved in both the arginine and lysine biosynthetic pathways. The chain is [LysW]-aminoadipate semialdehyde/glutamate semialdehyde transaminase from Sulfolobus acidocaldarius (strain ATCC 33909 / DSM 639 / JCM 8929 / NBRC 15157 / NCIMB 11770).